The sequence spans 215 residues: Adenylate kinase (215 aa).

10 to 15 (GAGKGT) contacts ATP. Residues 30 to 59 (STGDILRANVREGTELGLAAKAYMDKGELV) form an NMP region. Residues threonine 31, arginine 36, 57–59 (ELV), 85–88 (GYPR), and glutamine 92 contribute to the AMP site. An LID region spans residues 126-162 (GRLMCKCGASYHIISNPPKKDNVCDICGGEVFQRADD). Arginine 127 lines the ATP pocket. The Zn(2+) site is built by cysteine 130 and cysteine 132. Residue 135-136 (SY) participates in ATP binding. Positions 149 and 152 each coordinate Zn(2+). The AMP site is built by arginine 159 and arginine 170. Lysine 198 is an ATP binding site.

The protein belongs to the adenylate kinase family. In terms of assembly, monomer.

It is found in the cytoplasm. The enzyme catalyses AMP + ATP = 2 ADP. It participates in purine metabolism; AMP biosynthesis via salvage pathway; AMP from ADP: step 1/1. Its function is as follows. Catalyzes the reversible transfer of the terminal phosphate group between ATP and AMP. Plays an important role in cellular energy homeostasis and in adenine nucleotide metabolism. The sequence is that of Adenylate kinase from Methanosarcina acetivorans (strain ATCC 35395 / DSM 2834 / JCM 12185 / C2A).